A 513-amino-acid polypeptide reads, in one-letter code: 2-isopropylmalate synthase (513 aa).

The Pyruvate carboxyltransferase domain occupies leucine 5–valine 268. The Mn(2+) site is built by aspartate 14, histidine 202, histidine 204, and asparagine 239. The interval arginine 394–glycine 513 is regulatory domain.

This sequence belongs to the alpha-IPM synthase/homocitrate synthase family. LeuA type 1 subfamily. As to quaternary structure, homodimer. Mn(2+) serves as cofactor.

Its subcellular location is the cytoplasm. It carries out the reaction 3-methyl-2-oxobutanoate + acetyl-CoA + H2O = (2S)-2-isopropylmalate + CoA + H(+). Its pathway is amino-acid biosynthesis; L-leucine biosynthesis; L-leucine from 3-methyl-2-oxobutanoate: step 1/4. Its function is as follows. Catalyzes the condensation of the acetyl group of acetyl-CoA with 3-methyl-2-oxobutanoate (2-ketoisovalerate) to form 3-carboxy-3-hydroxy-4-methylpentanoate (2-isopropylmalate). In Methylibium petroleiphilum (strain ATCC BAA-1232 / LMG 22953 / PM1), this protein is 2-isopropylmalate synthase.